The sequence spans 283 residues: Zinc finger protein 691 (283 aa).

The span at 1–41 shows a compositional bias: basic and acidic residues; it reads MGSEKEQRPEAHLPEEGEGAKPWRVDGSKDSQITPREDHGQ. The interval 1–68 is disordered; sequence MGSEKEQRPE…KVTAQAGGPG (68 aa). Ser-43 bears the Phosphoserine mark. Residue Lys-81 forms a Glycyl lysine isopeptide (Lys-Gly) (interchain with G-Cter in SUMO2) linkage. 7 consecutive C2H2-type zinc fingers follow at residues 83–105, 111–133, 139–161, 167–189, 195–217, 223–245, and 251–273; these read FICA…QRIH, YKCS…ERIH, YQCA…QQDH, YRCD…HRTH, YICC…HRTH, YECT…QRTH, and YRCT…QKTH.

The protein belongs to the krueppel C2H2-type zinc-finger protein family.

It localises to the nucleus. In terms of biological role, may be involved in transcriptional regulation. This Mus musculus (Mouse) protein is Zinc finger protein 691 (Znf691).